A 66-amino-acid polypeptide reads, in one-letter code: Small ribosomal subunit protein eS27 (66 aa).

4 residues coordinate Zn(2+): Cys21, Cys24, Cys40, and Cys43. The segment at 21–43 (CRQCNNEQVIFSNATFPVRCLSC) adopts a C4-type zinc-finger fold.

The protein belongs to the eukaryotic ribosomal protein eS27 family. As to quaternary structure, part of the 30S ribosomal subunit. It depends on Zn(2+) as a cofactor.

This chain is Small ribosomal subunit protein eS27, found in Sulfolobus acidocaldarius (strain ATCC 33909 / DSM 639 / JCM 8929 / NBRC 15157 / NCIMB 11770).